Reading from the N-terminus, the 342-residue chain is Strictosidine synthase (342 aa).

Positions 1–20 are cleaved as a signal peptide; it reads KLSDSQTMALFTVFLLFLSS. Asn89 carries N-linked (GlcNAc...) asparagine glycosylation.

The protein belongs to the strictosidine synthase family. As to quaternary structure, monomer.

Its subcellular location is the vacuole. The enzyme catalyses 3alpha(S)-strictosidine + H2O = secologanin + tryptamine. It functions in the pathway alkaloid biosynthesis; 3alpha(S)-strictosidine biosynthesis; 3alpha(S)-strictosidine from secologanin and tryptamine: step 1/1. Catalyzes the stereospecific condensation of tryptamine with secologanin to form strictosidine, the key intermediate of indole alkaloid biosynthesis. In Rauvolfia mannii, this protein is Strictosidine synthase (STR1).